We begin with the raw amino-acid sequence, 95 residues long: Co-chaperonin GroES (95 aa).

This sequence belongs to the GroES chaperonin family. In terms of assembly, heptamer of 7 subunits arranged in a ring. Interacts with the chaperonin GroEL.

Its subcellular location is the cytoplasm. In terms of biological role, together with the chaperonin GroEL, plays an essential role in assisting protein folding. The GroEL-GroES system forms a nano-cage that allows encapsulation of the non-native substrate proteins and provides a physical environment optimized to promote and accelerate protein folding. GroES binds to the apical surface of the GroEL ring, thereby capping the opening of the GroEL channel. The sequence is that of Co-chaperonin GroES from Alkalilimnicola ehrlichii (strain ATCC BAA-1101 / DSM 17681 / MLHE-1).